The chain runs to 328 residues: Adenosine receptor A1 (328 aa).

Topologically, residues 1–10 are extracellular; the sequence is MPPSISAFQA. A helical transmembrane segment spans residues 11–33; sequence AYIGIEVLIALVSVPGNVLVIWA. Over 34–46 the chain is Cytoplasmic; it reads VKVNQALRDATFC. A helical transmembrane segment spans residues 47-69; that stretch reads FIVSLAVADVAVGALVIPLAILI. Residues 70 to 80 are Extracellular-facing; the sequence is NIGPETYFHTC. A disulfide bridge links C80 with C169. Residues 81–102 traverse the membrane as a helical segment; it reads LMVACPVLILTQSSILALLAIA. The Cytoplasmic segment spans residues 103–123; that stretch reads VDRYLRVKIPLRYKAVVTPRR. The chain crosses the membrane as a helical span at residues 124–146; sequence AAVAIAGCWILSLVVGLTPMFGW. At 147-176 the chain is on the extracellular side; it reads NNLREVQRAWAANGSVGEPVIKCEFEKVIS. Residue N159 is glycosylated (N-linked (GlcNAc...) asparagine). Residues 177–201 traverse the membrane as a helical segment; that stretch reads MEYMVYFNFFVWVLPPLLLMVLIYL. At 202 to 235 the chain is on the cytoplasmic side; it reads EVFYLIRRQLSKKASASSGDPHKYYGKELKIAKS. Residues 236–259 form a helical membrane-spanning segment; that stretch reads LALILFLFALSWLPLHILNCVTLF. Topologically, residues 260-267 are extracellular; that stretch reads CPSCQKPS. The helical transmembrane segment at 268–292 threads the bilayer; that stretch reads ILVYTAIFLTHGNSAMNPIVYAFRI. The Cytoplasmic segment spans residues 293-328; it reads HKFRVTFLKIWNDHFRCRPAPAGDGDEDLPEEKPND. A lipid anchor (S-palmitoyl cysteine) is attached at C309.

Belongs to the G-protein coupled receptor 1 family.

The protein resides in the cell membrane. Receptor for adenosine. The activity of this receptor is mediated by G proteins which inhibit adenylyl cyclase. This chain is Adenosine receptor A1 (ADORA1), found in Oryctolagus cuniculus (Rabbit).